We begin with the raw amino-acid sequence, 282 residues long: tRNA pseudouridine synthase A (282 aa).

The active-site Nucleophile is the D53. Y119 is a substrate binding site.

Belongs to the tRNA pseudouridine synthase TruA family. As to quaternary structure, homodimer.

The catalysed reaction is uridine(38/39/40) in tRNA = pseudouridine(38/39/40) in tRNA. Its function is as follows. Formation of pseudouridine at positions 38, 39 and 40 in the anticodon stem and loop of transfer RNAs. This Corynebacterium efficiens (strain DSM 44549 / YS-314 / AJ 12310 / JCM 11189 / NBRC 100395) protein is tRNA pseudouridine synthase A.